The primary structure comprises 222 residues: Flagellar L-ring protein (222 aa).

The N-terminal stretch at 1 to 18 is a signal peptide; it reads MRRPGAAALAAAALALAG. The N-palmitoyl cysteine moiety is linked to residue Cys-19. Cys-19 carries the S-diacylglycerol cysteine lipid modification.

This sequence belongs to the FlgH family. As to quaternary structure, the basal body constitutes a major portion of the flagellar organelle and consists of four rings (L,P,S, and M) mounted on a central rod.

Its subcellular location is the cell outer membrane. It localises to the bacterial flagellum basal body. Assembles around the rod to form the L-ring and probably protects the motor/basal body from shearing forces during rotation. This chain is Flagellar L-ring protein, found in Burkholderia mallei (strain ATCC 23344).